Here is a 433-residue protein sequence, read N- to C-terminus: UPF0597 protein DNO_0106 (433 aa).

It belongs to the UPF0597 family.

This Dichelobacter nodosus (strain VCS1703A) protein is UPF0597 protein DNO_0106.